A 172-amino-acid polypeptide reads, in one-letter code: Small ribosomal subunit protein uS5 (172 aa).

An S5 DRBM domain is found at 17-80; sequence LREKMIAVNR…EEARRNMVKV (64 aa).

The protein belongs to the universal ribosomal protein uS5 family. Part of the 30S ribosomal subunit. Contacts proteins S4 and S8.

Functionally, with S4 and S12 plays an important role in translational accuracy. Located at the back of the 30S subunit body where it stabilizes the conformation of the head with respect to the body. This Verminephrobacter eiseniae (strain EF01-2) protein is Small ribosomal subunit protein uS5.